An 801-amino-acid chain; its full sequence is Cation/H(+) antiporter 28 (801 aa).

12 helical membrane-spanning segments follow: residues 24-44, 77-97, 113-133, 140-160, 179-199, 216-236, 252-272, 275-292, 304-324, 343-363, 371-391, and 403-423; these read ALKI…HYLM, SITL…VMGL, FIAY…TPFL, PYIF…PILT, AAGV…FIFF, LLMF…SPIF, GSHL…PTWP, SMYN…FLPN, INYL…GFII, LLGT…LLLG, SLGL…ALAI, and LIIF…MDII.

Belongs to the monovalent cation:proton antiporter 2 (CPA2) transporter (TC 2.A.37) family. CHX (TC 2.A.37.4) subfamily. As to expression, specifically expressed in pollen.

Its subcellular location is the membrane. In terms of biological role, may operate as a cation/H(+) antiporter. In Arabidopsis thaliana (Mouse-ear cress), this protein is Cation/H(+) antiporter 28 (CHX28).